A 147-amino-acid polypeptide reads, in one-letter code: Phage-like element PBSX protein XkdM (147 aa).

This sequence to B.subtilis YqbM.

The sequence is that of Phage-like element PBSX protein XkdM (xkdM) from Bacillus subtilis (strain 168).